A 478-amino-acid polypeptide reads, in one-letter code: MNVNLMWFRNDLRLSDNSALHFSCRNNASTVLALFIATPKQWERHCLAPKKKMLIYKNIVALKKKITELGIIFYYYESTDYLESTNYIIEFCKIHKVTSIFFNLEYEFYERQRDKIIKKKLKKNNIIINCFHDSVLITPGSIKNSYGKMYKKFSYFKYKCIKQLQLNIPSCFPKPQNKNLHDHYSLDFTIPIFHTYLEKFDANIFPIGEDIVYEKLKFFIKYAFNKYNFDQEIFELNSTSMLSAHLSIGVISPRQCVTLLFKEYPDIIHKLEECKWINELLWREFYQHLLYFYPNIGQNQSLYHWENRIKWDNNLYYLNLWKQGNTGYPIIDAGMRQLKQLGWISNRLRMITASFLVKNLLIDWRKGEEYFMSQLIDGDFASNNGNWQWIASVGTDSMPYFRIFNPMLQSKKFDINAKFIRKYIPELSNVSTYNIHNPCDNNKTNKIHSKYPQPIINYYHSKKKTLLVFKHAKCSNKL.

The Photolyase/cryptochrome alpha/beta domain maps to 2–136 (NVNLMWFRND…IINCFHDSVL (135 aa)). Glutamate 110 provides a ligand contact to (6R)-5,10-methylene-5,6,7,8-tetrahydrofolate. FAD contacts are provided by residues tyrosine 227 and 239–243 (TSMLS). Interaction with DNA regions lie at residues 279–286 (ELLWREFY) and 346–347 (NR). 377–379 (DGD) contributes to the FAD binding site. Position 409 (glutamine 409) interacts with DNA.

The protein belongs to the DNA photolyase class-1 family. In terms of assembly, monomer. Requires FAD as cofactor. It depends on (6R)-5,10-methylene-5,6,7,8-tetrahydrofolate as a cofactor.

It catalyses the reaction cyclobutadipyrimidine (in DNA) = 2 pyrimidine residues (in DNA).. Involved in repair of UV radiation-induced DNA damage. Catalyzes the light-dependent monomerization (300-600 nm) of cyclobutyl pyrimidine dimers (in cis-syn configuration), which are formed between adjacent bases on the same DNA strand upon exposure to ultraviolet radiation. The protein is Deoxyribodipyrimidine photo-lyase (phrB) of Buchnera aphidicola subsp. Baizongia pistaciae (strain Bp).